The sequence spans 666 residues: Protein-arginine deiminase type-4 (666 aa).

6 residues coordinate Ca(2+): Asn153, Asp155, Asp165, Asp168, Asp176, and Asp179. Citrulline is present on residues Arg212 and Arg218. A Ca(2+)-binding site is contributed by Gln349. Asp350 is a catalytic residue. Residues Glu351, Glu353, Asp369, and Ser370 each contribute to the Ca(2+) site. Arg372, Arg374, and Arg383 each carry citrulline. Residue Arg374 participates in substrate binding. Ca(2+) is bound by residues Phe407, Leu410, and Glu411. Active-site residues include His471, Asp473, and Cys648.

This sequence belongs to the protein arginine deiminase family. Requires Ca(2+) as cofactor. Post-translationally, autocitrullination at Arg-372 and Arg-374 inactivates the enzyme. As to expression, expressed in pluripotent embryonic stem and induced pluripotent stem cells but not multipotent neural stem cells.

The protein localises to the cytoplasm. Its subcellular location is the nucleus. It is found in the cytoplasmic granule. The catalysed reaction is L-arginyl-[protein] + H2O = L-citrullyl-[protein] + NH4(+). Strongly Inhibited by F-amidine and N-alpha-benzoyl-N5-(2-chloro-1-iminoethyl)-L-ornithine amide (Cl-amidine). These inhibitors are however not specific to PADI4 and also inhibit other members of the family. Catalyzes the citrullination/deimination of arginine residues of proteins such as histones, thereby playing a key role in histone code and regulation of stem cell maintenance. Citrullinates histone H1 at 'Arg-54' (to form H1R54ci), histone H3 at 'Arg-2', 'Arg-8', 'Arg-17' and/or 'Arg-26' (to form H3R2ci, H3R8ci, H3R17ci, H3R26ci, respectively) and histone H4 at 'Arg-3' (to form H4R3ci). Acts as a key regulator of stem cell maintenance by mediating citrullination of histone H1: citrullination of 'Arg-54' of histone H1 (H1R54ci) results in H1 displacement from chromatin and global chromatin decondensation, thereby promoting pluripotency and stem cell maintenance. Promotes profound chromatin decondensation during the innate immune response to infection in neutrophils by mediating formation of H1R54ci. Required for the formation of neutrophil extracellular traps (NETs); NETs are mainly composed of DNA fibers and are released by neutrophils to bind pathogens during inflammation. Citrullination of histone H3 prevents their methylation by CARM1 and HRMT1L2/PRMT1 and represses transcription. Citrullinates EP300/P300 at 'Arg-2142', which favors its interaction with NCOA2/GRIP1. The polypeptide is Protein-arginine deiminase type-4 (Padi4) (Mus musculus (Mouse)).